The primary structure comprises 120 residues: UPF0102 protein FRAAL5785 (120 aa).

The protein belongs to the UPF0102 family.

In Frankia alni (strain DSM 45986 / CECT 9034 / ACN14a), this protein is UPF0102 protein FRAAL5785.